The following is a 504-amino-acid chain: Cytochrome P450 6B6 (504 aa).

Heme is bound at residue Cys-445.

Belongs to the cytochrome P450 family. Heme is required as a cofactor.

Its subcellular location is the endoplasmic reticulum membrane. It localises to the microsome membrane. The catalysed reaction is an organic molecule + reduced [NADPH--hemoprotein reductase] + O2 = an alcohol + oxidized [NADPH--hemoprotein reductase] + H2O + H(+). The chain is Cytochrome P450 6B6 (CYP6B6) from Helicoverpa armigera (Cotton bollworm).